A 326-amino-acid chain; its full sequence is Transcription factor bHLH143 (326 aa).

Positions 175–189 are enriched in acidic residues; the sequence is SDDDDNDDWESDDEV. Disordered regions lie at residues 175–194 and 234–275; these read SDDD…STGH and RDSS…EQSR. Residues 255 to 271 are compositionally biased toward polar residues; sequence PESNISSKQETGSGLSD. The 50-residue stretch at 263 to 312 folds into the bHLH domain; the sequence is QETGSGLSDEQSRKDKIHTALRILESVVPGAKGKEALLLLDEAIDYLKLL.

As to quaternary structure, homodimer.

The protein resides in the nucleus. The sequence is that of Transcription factor bHLH143 (BHLH143) from Arabidopsis thaliana (Mouse-ear cress).